The primary structure comprises 264 residues: 3-methyl-2-oxobutanoate hydroxymethyltransferase 1 (264 aa).

Mg(2+) contacts are provided by aspartate 45 and aspartate 84. Residues 45-46 (DS), aspartate 84, and lysine 112 contribute to the 3-methyl-2-oxobutanoate site. Glutamate 114 is a Mg(2+) binding site. Residue glutamate 181 is the Proton acceptor of the active site.

Belongs to the PanB family. As to quaternary structure, homodecamer; pentamer of dimers. It depends on Mg(2+) as a cofactor.

The protein resides in the cytoplasm. It carries out the reaction 3-methyl-2-oxobutanoate + (6R)-5,10-methylene-5,6,7,8-tetrahydrofolate + H2O = 2-dehydropantoate + (6S)-5,6,7,8-tetrahydrofolate. Its pathway is cofactor biosynthesis; (R)-pantothenate biosynthesis; (R)-pantoate from 3-methyl-2-oxobutanoate: step 1/2. Its function is as follows. Catalyzes the reversible reaction in which hydroxymethyl group from 5,10-methylenetetrahydrofolate is transferred onto alpha-ketoisovalerate to form ketopantoate. The protein is 3-methyl-2-oxobutanoate hydroxymethyltransferase 1 of Aliivibrio fischeri (strain ATCC 700601 / ES114) (Vibrio fischeri).